The following is a 400-amino-acid chain: Tryptophan synthase beta chain (400 aa).

Lys92 is modified (N6-(pyridoxal phosphate)lysine).

Belongs to the TrpB family. As to quaternary structure, tetramer of two alpha and two beta chains. Pyridoxal 5'-phosphate serves as cofactor.

It carries out the reaction (1S,2R)-1-C-(indol-3-yl)glycerol 3-phosphate + L-serine = D-glyceraldehyde 3-phosphate + L-tryptophan + H2O. It participates in amino-acid biosynthesis; L-tryptophan biosynthesis; L-tryptophan from chorismate: step 5/5. Functionally, the beta subunit is responsible for the synthesis of L-tryptophan from indole and L-serine. The chain is Tryptophan synthase beta chain from Neisseria meningitidis serogroup C (strain 053442).